Consider the following 148-residue polypeptide: Flavodoxin (148 aa).

The Flavodoxin-like domain occupies 4 to 145 (VLILFGSSTG…AVSAFAEDVL (142 aa)).

Belongs to the flavodoxin family. The cofactor is FMN.

Low-potential electron donor to a number of redox enzymes. This chain is Flavodoxin, found in Desulfovibrio desulfuricans (strain ATCC 27774 / DSM 6949 / MB).